A 160-amino-acid chain; its full sequence is Large ribosomal subunit protein eL21 (160 aa).

It belongs to the eukaryotic ribosomal protein eL21 family. In terms of assembly, component of the large ribosomal subunit. Mature ribosomes consist of a small (40S) and a large (60S) subunit. The 40S subunit contains about 32 different proteins and 1 molecule of RNA (18S). The 60S subunit contains 45 different proteins and 3 molecules of RNA (25S, 5.8S and 5S).

The protein resides in the cytoplasm. Component of the ribosome, a large ribonucleoprotein complex responsible for the synthesis of proteins in the cell. The small ribosomal subunit (SSU) binds messenger RNAs (mRNAs) and translates the encoded message by selecting cognate aminoacyl-transfer RNA (tRNA) molecules. The large subunit (LSU) contains the ribosomal catalytic site termed the peptidyl transferase center (PTC), which catalyzes the formation of peptide bonds, thereby polymerizing the amino acids delivered by tRNAs into a polypeptide chain. The nascent polypeptides leave the ribosome through a tunnel in the LSU and interact with protein factors that function in enzymatic processing, targeting, and the membrane insertion of nascent chains at the exit of the ribosomal tunnel. In Candida albicans (strain SC5314 / ATCC MYA-2876) (Yeast), this protein is Large ribosomal subunit protein eL21.